The following is a 554-amino-acid chain: uncharacterized protein (554 aa).

This is an uncharacterized protein from Acidianus sp. F28 (AFV-2).